Consider the following 710-residue polypeptide: WD repeat-containing protein CG11141 (710 aa).

WD repeat units lie at residues 31-70 (FFPA…MQKL) and 133-172 (LHKC…HLSK). The segment at 283–307 (LNPKQRSEPSGTHHTSASTSSTRHS) is disordered. Positions 292 to 307 (SGTHHTSASTSSTRHS) are enriched in low complexity. A Phosphothreonine modification is found at Thr488. Position 553 is a phosphoserine (Ser553). Disordered regions lie at residues 612-635 (ASIQ…GEPV) and 685-710 (DPLA…FLDN). Polar residues-rich tracts occupy residues 613-624 (SIQTSSRENATN) and 694-704 (PATSDSNTSSE).

This sequence belongs to the WD repeat KIAA0329 family.

In Drosophila melanogaster (Fruit fly), this protein is WD repeat-containing protein CG11141.